A 184-amino-acid polypeptide reads, in one-letter code: UPF0215 protein MJ1150 (184 aa).

Belongs to the UPF0215 family.

The polypeptide is UPF0215 protein MJ1150 (Methanocaldococcus jannaschii (strain ATCC 43067 / DSM 2661 / JAL-1 / JCM 10045 / NBRC 100440) (Methanococcus jannaschii)).